The chain runs to 141 residues: Putative pre-16S rRNA nuclease (141 aa).

Belongs to the YqgF nuclease family.

It is found in the cytoplasm. Functionally, could be a nuclease involved in processing of the 5'-end of pre-16S rRNA. The chain is Putative pre-16S rRNA nuclease from Histophilus somni (strain 129Pt) (Haemophilus somnus).